The sequence spans 842 residues: ATP-binding cassette sub-family B member 6 (842 aa).

Topologically, residues M1–C26 are lumenal. The tract at residues M1–W205 is required for the lysosomal targeting. The tract at residues M1–Q236 is required for ATPase activity. N6 is a glycosylation site (N-linked (GlcNAc...) asparagine). A disulfide bridge connects residues C8 and C26. A helical membrane pass occupies residues F27–A47. Residues L48 to P72 are Cytoplasmic-facing. Residues Y73–G93 form a helical membrane-spanning segment. The Lumenal portion of the chain corresponds to R94–Y106. A helical membrane pass occupies residues L107–V127. The Cytoplasmic segment spans residues E128–S147. A helical membrane pass occupies residues P148–W168. The Lumenal portion of the chain corresponds to N169–Q185. Residues F186 to A206 form a helical membrane-spanning segment. At P207–L263 the chain is on the cytoplasmic side. The chain crosses the membrane as a helical span at residues V264 to I284. Positions V265–T556 constitute an ABC transmembrane type-1 domain. Over F285–N291 the chain is Lumenal. The helical transmembrane segment at L292 to L312 threads the bilayer. The Cytoplasmic portion of the chain corresponds to K313–R375. The chain crosses the membrane as a helical span at residues G376–A396. D397 is a topological domain (lumenal). A helical transmembrane segment spans residues I398–F418. Topologically, residues L419–Q499 are cytoplasmic. The chain crosses the membrane as a helical span at residues T500–V520. Topologically, residues T521–D529 are lumenal. Residues Y530–Y550 traverse the membrane as a helical segment. Over Y551 to R842 the chain is Cytoplasmic. Positions I590–L824 constitute an ABC transporter domain. ATP is bound by residues Y599 and G623–R634.

Belongs to the ABC transporter superfamily. ABCB family. Heavy Metal importer (TC 3.A.1.210) subfamily. As to quaternary structure, homodimer. N-glycosylated. Widely expressed. High expression is detected in the retinal epithelium. Expressed in mature erythrocytes.

The protein resides in the cell membrane. It localises to the mitochondrion outer membrane. Its subcellular location is the endoplasmic reticulum membrane. It is found in the golgi apparatus membrane. The protein localises to the endosome membrane. The protein resides in the lysosome membrane. It localises to the late endosome membrane. Its subcellular location is the early endosome membrane. It is found in the secreted. The protein localises to the extracellular exosome. The protein resides in the mitochondrion. It localises to the endosome. Its subcellular location is the multivesicular body membrane. It is found in the melanosome membrane. It catalyses the reaction heme b(in) + ATP + H2O = heme b(out) + ADP + phosphate + H(+). The enzyme catalyses coproporphyrin III(in) + ATP + H2O = coproporphyrin III(out) + ADP + phosphate + H(+). The catalysed reaction is pheophorbide a(in) + ATP + H2O = pheophorbide a(out) + ADP + phosphate + H(+). It carries out the reaction coproporphyrinogen III(in) + ATP + H2O = coproporphyrinogen III(out) + ADP + phosphate + H(+). It catalyses the reaction protoporphyrin IX(in) + ATP + H2O = protoporphyrin IX(out) + ADP + phosphate + H(+). The enzyme catalyses coproporphyrin I(in) + ATP + H2O = coproporphyrin I(out) + ADP + phosphate + H(+). The catalysed reaction is uroporphyrin I(in) + ATP + H2O = uroporphyrin I(out) + ADP + phosphate + H(+). It carries out the reaction uroporphyrin III(in) + ATP + H2O = uroporphyrin III(out) + ADP + phosphate + H(+). Its activity is regulated as follows. ATPase activity is inhibited by MgATP with an IC(50) of 1.03 mM and up-regulated by coporphyrin III&gt; hemin &gt; protoporphyrin IX. ATPase activity for hemin is up-regulated by glutathione. The ATPase activity is impaired by increasing copper concentrations (0-300 uM). The ATPase activity is stimulated in presence of glutathione for increasing copper concentrations (0-300 uM). Its function is as follows. ATP-dependent transporter that catalyzes the transport of a broad-spectrum of porphyrins from the cytoplasm to the extracellular space through the plasma membrane or into the vesicle lumen. May also function as an ATP-dependent importer of porphyrins from the cytoplasm into the mitochondria, in turn may participate in the de novo heme biosynthesis regulation and in the coordination of heme and iron homeostasis during phenylhydrazine stress. May also play a key role in the early steps of melanogenesis producing PMEL amyloid fibrils. In vitro, it confers to cells a resistance to toxic metal such as arsenic and cadmium and against chemotherapeutics agent such as 5-fluorouracil, SN-38 and vincristin. In addition may play a role in the transition metal homeostasis. In Homo sapiens (Human), this protein is ATP-binding cassette sub-family B member 6.